Here is a 117-residue protein sequence, read N- to C-terminus: Large ribosomal subunit protein bL20 (117 aa).

Belongs to the bacterial ribosomal protein bL20 family.

Functionally, binds directly to 23S ribosomal RNA and is necessary for the in vitro assembly process of the 50S ribosomal subunit. It is not involved in the protein synthesizing functions of that subunit. The sequence is that of Large ribosomal subunit protein bL20 from Ruminiclostridium cellulolyticum (strain ATCC 35319 / DSM 5812 / JCM 6584 / H10) (Clostridium cellulolyticum).